The following is a 493-amino-acid chain: Glutamate--tRNA ligase (493 aa).

A 'HIGH' region motif is present at residues P10 to T20. Positions K251 to R255 match the 'KMSKS' region motif. Residue K254 coordinates ATP.

Belongs to the class-I aminoacyl-tRNA synthetase family. Glutamate--tRNA ligase type 1 subfamily. Monomer.

The protein resides in the cytoplasm. It carries out the reaction tRNA(Glu) + L-glutamate + ATP = L-glutamyl-tRNA(Glu) + AMP + diphosphate. Its function is as follows. Catalyzes the attachment of glutamate to tRNA(Glu) in a two-step reaction: glutamate is first activated by ATP to form Glu-AMP and then transferred to the acceptor end of tRNA(Glu). This Pseudomonas fluorescens (strain Pf0-1) protein is Glutamate--tRNA ligase.